We begin with the raw amino-acid sequence, 80 residues long: UPF0248 protein M1425_2629 (80 aa).

The protein belongs to the UPF0248 family.

This chain is UPF0248 protein M1425_2629, found in Saccharolobus islandicus (strain M.14.25 / Kamchatka #1) (Sulfolobus islandicus).